The following is a 653-amino-acid chain: MGCSSSSTKTRRSDTSLRAALIIQNWYRGYKARLKARQHYALTIFQSIEYADEQGQMQLSTFFSFMLENYTHIHKEELELRNQSLESEQDMRDRWDYVDSIDVPDSYNGPRLQFPLTCTDIDLLLEAFKEQQILHAHYVLEVLFETKKVLKQMPNFTHIQTSPSKEVTICGDLHGKLDDLFLIFYKNGLPSERNPYVFNGDFVDRGKNSIEILMILCVSFLVYPNDLHLNRGNHEDFMMNLRYGFTKEILHKYKLHGKRILQILEEFYAWLPIGTIVDNEILVIHGGISETTDLNLLHRVERNKMKSVLIPPTETNRDHDTDSKHNKVGVTFNAHGRIKTNGSPTEHLTEHEWEQIIDILWSDPRGKNGCFPNTCRGGGCYFGPDVTSKILNKYQLKMLIRSHECKPEGYEICHDGKVVTIFSASNYYEEGSNRGAYIKLCSGTTPRFFQYQVTKATCFQPLRQRVDTMENSAIKILRERVISRKSDLTRAFQLQDHRKSGKLSVSQWAFCMENILGLNLPWRSLSSNLVNIDQNGNVEYMSSFQNIRIEKPVQEAHSTLVETLYRYRSDLEIIFNAIDTDHSGLISVEEFRAMWKLFSSHYNVHIDDSQVNKLANIMDLNKDGSIDFNEFLKAFYVVHRYEDLMKPDVTNLG.

The region spanning 16–45 (SLRAALIIQNWYRGYKARLKARQHYALTIF) is the IQ domain. The segment at 121 to 455 (IDLLLEAFKE…PRFFQYQVTK (335 aa)) is catalytic. Positions 172, 174, 201, and 233 each coordinate Mn(2+). Histidine 234 (proton donor) is an active-site residue. Histidine 285 and histidine 403 together coordinate Mn(2+). EF-hand domains lie at 483 to 518 (SRKS…ILGL), 566 to 601 (RYRS…FSSH), and 606 to 641 (IDDS…VHRY). Residues aspartate 579, aspartate 581, serine 583, glutamate 590, aspartate 619, asparagine 621, aspartate 623, serine 625, and glutamate 630 each contribute to the Ca(2+) site.

This sequence belongs to the PPP phosphatase family. Mn(2+) serves as cofactor. Mg(2+) is required as a cofactor. In terms of tissue distribution, detected in retina and retinal derived Y-79 retinoblastoma cells. Also found in fetal brain.

It carries out the reaction O-phospho-L-seryl-[protein] + H2O = L-seryl-[protein] + phosphate. The catalysed reaction is O-phospho-L-threonyl-[protein] + H2O = L-threonyl-[protein] + phosphate. With respect to regulation, activated by calcium. Functionally, may have a role in the recovery or adaptation response of photoreceptors. May have a role in development. The protein is Serine/threonine-protein phosphatase with EF-hands 1 (PPEF1) of Homo sapiens (Human).